A 105-amino-acid chain; its full sequence is Integration host factor subunit beta (105 aa).

Belongs to the bacterial histone-like protein family. In terms of assembly, heterodimer of an alpha and a beta chain.

This protein is one of the two subunits of integration host factor, a specific DNA-binding protein that functions in genetic recombination as well as in transcriptional and translational control. The protein is Integration host factor subunit beta of Nitrosomonas europaea (strain ATCC 19718 / CIP 103999 / KCTC 2705 / NBRC 14298).